Consider the following 274-residue polypeptide: 3-methyl-2-oxobutanoate hydroxymethyltransferase (274 aa).

Mg(2+) contacts are provided by Asp49 and Asp88. 3-methyl-2-oxobutanoate contacts are provided by residues 49–50, Asp88, and Lys118; that span reads DS. Mg(2+) is bound at residue Glu120. Glu187 (proton acceptor) is an active-site residue.

It belongs to the PanB family. Homodecamer; pentamer of dimers. Mg(2+) is required as a cofactor.

It localises to the cytoplasm. The enzyme catalyses 3-methyl-2-oxobutanoate + (6R)-5,10-methylene-5,6,7,8-tetrahydrofolate + H2O = 2-dehydropantoate + (6S)-5,6,7,8-tetrahydrofolate. It functions in the pathway cofactor biosynthesis; (R)-pantothenate biosynthesis; (R)-pantoate from 3-methyl-2-oxobutanoate: step 1/2. In terms of biological role, catalyzes the reversible reaction in which hydroxymethyl group from 5,10-methylenetetrahydrofolate is transferred onto alpha-ketoisovalerate to form ketopantoate. This chain is 3-methyl-2-oxobutanoate hydroxymethyltransferase, found in Rhodopseudomonas palustris (strain BisB5).